Consider the following 253-residue polypeptide: 5'-nucleotidase SurE (253 aa).

Residues aspartate 8, aspartate 9, serine 40, and asparagine 93 each coordinate a divalent metal cation.

The protein belongs to the SurE nucleotidase family. It depends on a divalent metal cation as a cofactor.

Its subcellular location is the cytoplasm. It catalyses the reaction a ribonucleoside 5'-phosphate + H2O = a ribonucleoside + phosphate. In terms of biological role, nucleotidase that shows phosphatase activity on nucleoside 5'-monophosphates. The protein is 5'-nucleotidase SurE of Methylobacterium sp. (strain 4-46).